We begin with the raw amino-acid sequence, 364 residues long: GTPase Obg (364 aa).

The Obg domain maps to 1-159; sequence MKFIDEARIE…RNLRLELKVL (159 aa). The interval 128–147 is disordered; that stretch reads IHFKSSTNRAPRQKTDGKAG. Positions 160-334 constitute an OBG-type G domain; sequence ADVGLLGMPN…LVHAIQEYLD (175 aa). GTP is bound by residues 166-173, 191-195, 213-216, 284-287, and 315-317; these read GMPNAGKS, FTTLH, DIPG, NKLD, and SAL. Residues Ser173 and Thr193 each coordinate Mg(2+). The interval 340–364 is disordered; sequence EDAAAAAPDQRLDPTLHNVDHDDQA. Residues 349–364 show a composition bias toward basic and acidic residues; that stretch reads QRLDPTLHNVDHDDQA.

This sequence belongs to the TRAFAC class OBG-HflX-like GTPase superfamily. OBG GTPase family. As to quaternary structure, monomer. The cofactor is Mg(2+).

The protein localises to the cytoplasm. An essential GTPase which binds GTP, GDP and possibly (p)ppGpp with moderate affinity, with high nucleotide exchange rates and a fairly low GTP hydrolysis rate. Plays a role in control of the cell cycle, stress response, ribosome biogenesis and in those bacteria that undergo differentiation, in morphogenesis control. This is GTPase Obg from Ralstonia pickettii (strain 12J).